The sequence spans 112 residues: Abdominal ganglion neuropeptides L5-67 (112 aa).

The N-terminal stretch at M1–S23 is a signal peptide. F33 carries the phenylalanine amide modification.

In terms of processing, the prohormone is proteolytically cleaved in 2 steps, yielding first 2 products: luqin and PRMP. In the second step, PRMP is cleaved to yield luqin-B and luqin-C. In terms of tissue distribution, neurons L2-4 and L6, also called giant dorsal LUQ (Left Upper Quadrant) neurons of the abdominal ganglion. Also expressed in smaller neurons in the CNS and in peripheral organs such as the kidney.

The protein localises to the secreted. In Aplysia californica (California sea hare), this protein is Abdominal ganglion neuropeptides L5-67.